Reading from the N-terminus, the 442-residue chain is Protein translocase subunit SecF (442 aa).

The segment at Met-1–Ala-39 is disordered. Transmembrane regions (helical) follow at residues Trp-67–Phe-87, Ile-187–Thr-207, Ala-218–Phe-238, Ala-243–Phe-263, Leu-301–Gly-321, and Leu-331–Thr-351. A disordered region spans residues Val-366 to Arg-442. Residues Gln-402–Arg-432 are compositionally biased toward low complexity. A compositionally biased stretch (basic residues) spans Pro-433 to Arg-442.

It belongs to the SecD/SecF family. SecF subfamily. Forms a complex with SecD. Part of the essential Sec protein translocation apparatus which comprises SecA, SecYEG and auxiliary proteins SecDF. Other proteins may also be involved.

The protein localises to the cell membrane. In terms of biological role, part of the Sec protein translocase complex. Interacts with the SecYEG preprotein conducting channel. SecDF uses the proton motive force (PMF) to complete protein translocation after the ATP-dependent function of SecA. This Mycobacterium tuberculosis (strain ATCC 25618 / H37Rv) protein is Protein translocase subunit SecF.